Reading from the N-terminus, the 234-residue chain is Small ribosomal subunit protein uS3 (234 aa).

The KH type-2 domain occupies Val-39 to Lys-107.

The protein belongs to the universal ribosomal protein uS3 family. Part of the 30S ribosomal subunit. Forms a tight complex with proteins S10 and S14.

Functionally, binds the lower part of the 30S subunit head. Binds mRNA in the 70S ribosome, positioning it for translation. This is Small ribosomal subunit protein uS3 from Haemophilus ducreyi (strain 35000HP / ATCC 700724).